Consider the following 353-residue polypeptide: GDSL esterase/lipase At5g03810 (353 aa).

Positions 1-24 are cleaved as a signal peptide; the sequence is MKMFITMSMCLSVIACFYAGVGTG. Serine 37 (nucleophile) is an active-site residue. N-linked (GlcNAc...) asparagine glycosylation is found at asparagine 100, asparagine 255, asparagine 256, asparagine 260, and asparagine 320. Residues aspartate 328 and histidine 331 contribute to the active site.

It belongs to the 'GDSL' lipolytic enzyme family.

The protein resides in the secreted. The sequence is that of GDSL esterase/lipase At5g03810 from Arabidopsis thaliana (Mouse-ear cress).